We begin with the raw amino-acid sequence, 212 residues long: Adenylate kinase (212 aa).

10 to 15 (GSGKGT) lines the ATP pocket. Residues 30–59 (STGDLMRKEINDETPLGIECARYMNEGRLV) form an NMP region. AMP-binding positions include Thr-31, Arg-36, 57–59 (RLV), and Gln-90. The LID stretch occupies residues 124-161 (GRLICPKCKVSYHIISRKPKLEGICDNDGTELVRRPDD). Residue Arg-125 participates in ATP binding. Zn(2+) is bound by residues Cys-128 and Cys-131. 134 to 135 (SY) serves as a coordination point for ATP. Zn(2+) is bound by residues Cys-148 and Asp-151. AMP-binding residues include Arg-158 and Arg-169. Asn-198 is a binding site for ATP.

The protein belongs to the adenylate kinase family. Monomer.

The protein localises to the cytoplasm. It catalyses the reaction AMP + ATP = 2 ADP. It participates in purine metabolism; AMP biosynthesis via salvage pathway; AMP from ADP: step 1/1. In terms of biological role, catalyzes the reversible transfer of the terminal phosphate group between ATP and AMP. Plays an important role in cellular energy homeostasis and in adenine nucleotide metabolism. The protein is Adenylate kinase of Mesoplasma florum (strain ATCC 33453 / NBRC 100688 / NCTC 11704 / L1) (Acholeplasma florum).